Consider the following 300-residue polypeptide: PTB domain-containing engulfment adapter protein 1 (300 aa).

The 156-residue stretch at 21–176 folds into the PID domain; sequence AKHFIPYNAK…GGLQKRIQDL (156 aa). Residues 160 to 199 are a coiled coil; it reads VETRKQIGGLQKRIQDLETENVELKKQLQVLEEQLMIAQV.

The protein belongs to the ced-6 family.

It is found in the cytoplasm. Its function is as follows. May function as an adapter protein. Required for efficient phagocytosis of apoptotic cells. May play a role in the internalization and endosomal trafficking of various lrp1 ligands. The sequence is that of PTB domain-containing engulfment adapter protein 1 (gulp1) from Danio rerio (Zebrafish).